Reading from the N-terminus, the 157-residue chain is Endoribonuclease YbeY (157 aa).

Zn(2+)-binding residues include His115, His119, and His125.

The protein belongs to the endoribonuclease YbeY family. Requires Zn(2+) as cofactor.

Its subcellular location is the cytoplasm. Single strand-specific metallo-endoribonuclease involved in late-stage 70S ribosome quality control and in maturation of the 3' terminus of the 16S rRNA. The polypeptide is Endoribonuclease YbeY (Micrococcus luteus (strain ATCC 4698 / DSM 20030 / JCM 1464 / CCM 169 / CCUG 5858 / IAM 1056 / NBRC 3333 / NCIMB 9278 / NCTC 2665 / VKM Ac-2230) (Micrococcus lysodeikticus)).